We begin with the raw amino-acid sequence, 323 residues long: o-succinylbenzoate synthase (323 aa).

Residue Lys134 is the Proton donor of the active site. Residues Asp162, Glu191, and Asp214 each coordinate Mg(2+). Lys236 (proton acceptor) is an active-site residue.

Belongs to the mandelate racemase/muconate lactonizing enzyme family. MenC type 1 subfamily. Requires a divalent metal cation as cofactor.

It catalyses the reaction (1R,6R)-6-hydroxy-2-succinyl-cyclohexa-2,4-diene-1-carboxylate = 2-succinylbenzoate + H2O. It functions in the pathway quinol/quinone metabolism; 1,4-dihydroxy-2-naphthoate biosynthesis; 1,4-dihydroxy-2-naphthoate from chorismate: step 4/7. The protein operates within quinol/quinone metabolism; menaquinone biosynthesis. Its function is as follows. Converts 2-succinyl-6-hydroxy-2,4-cyclohexadiene-1-carboxylate (SHCHC) to 2-succinylbenzoate (OSB). This Yersinia pseudotuberculosis serotype I (strain IP32953) protein is o-succinylbenzoate synthase.